A 136-amino-acid polypeptide reads, in one-letter code: 2-hydroxyisobutanoyl-CoA mutase small subunit (136 aa).

The B12-binding domain maps to 5 to 133; sequence PIRVLLAKVG…DSIRSLVAAR (129 aa). Adenosylcob(III)alamin is bound at residue His18.

This sequence belongs to the acyl-CoA mutase small subunit family. As to quaternary structure, homotetramer composed of two large substrate-binding subunits (HcmA) and two small cobalamin-binding subunits (HcmB). Adenosylcob(III)alamin serves as cofactor.

The catalysed reaction is 2-hydroxyisobutanoyl-CoA = (3S)-3-hydroxybutanoyl-CoA. Together with HcmA, catalyzes the isomerization of 2-hydroxyisobutyryl-CoA and 3-hydroxybutyryl-CoA. Is specific for 2-hydroxyisobutyryl-CoA and (S)-3-hydroxybutyryl-CoA, and shows only very low activity with (R)-3-hydroxybutyryl-CoA, isobutyryl-CoA and butyryl-CoA. In vitro, can isomerize pivalyl-CoA and isovaleryl-CoA, with much lower efficiency. Plays a central role in the degradation of substrates bearing a tert-butyl moiety, such as the fuel oxygenate methyl tert-butyl ether (MTBE) and its metabolites. This is 2-hydroxyisobutanoyl-CoA mutase small subunit from Aquincola tertiaricarbonis.